A 228-amino-acid chain; its full sequence is Peroxiredoxin-like 2C (228 aa).

Positions Met1 to Val22 are disordered. Residues Val13 to Val22 show a composition bias toward low complexity.

The protein belongs to the peroxiredoxin-like PRXL2 family. PRXL2C subfamily.

May positively regulate ERK1/2 signaling and AKT1 activation leading to HIF1A up-regulation with an increased expression of glycolysis genes and enhanced glycolysis. The protein is Peroxiredoxin-like 2C (PRXL2C) of Bos taurus (Bovine).